The following is a 383-amino-acid chain: tRNA(Met) cytidine acetate ligase (383 aa).

ATP-binding positions include 7 to 20, Gly-102, Asn-160, and 181 to 182; these read ISEY…HLYQ and RI.

It belongs to the TmcAL family.

It is found in the cytoplasm. The catalysed reaction is cytidine(34) in elongator tRNA(Met) + acetate + ATP = N(4)-acetylcytidine(34) in elongator tRNA(Met) + AMP + diphosphate. In terms of biological role, catalyzes the formation of N(4)-acetylcytidine (ac(4)C) at the wobble position of elongator tRNA(Met), using acetate and ATP as substrates. First activates an acetate ion to form acetyladenylate (Ac-AMP) and then transfers the acetyl group to tRNA to form ac(4)C34. The chain is tRNA(Met) cytidine acetate ligase from Exiguobacterium sibiricum (strain DSM 17290 / CCUG 55495 / CIP 109462 / JCM 13490 / 255-15).